Reading from the N-terminus, the 95-residue chain is Small ribosomal subunit protein bS18 (95 aa).

The protein belongs to the bacterial ribosomal protein bS18 family. Part of the 30S ribosomal subunit. Forms a tight heterodimer with protein bS6.

Its function is as follows. Binds as a heterodimer with protein bS6 to the central domain of the 16S rRNA, where it helps stabilize the platform of the 30S subunit. The chain is Small ribosomal subunit protein bS18 from Rickettsia peacockii (strain Rustic).